The sequence spans 211 residues: Large ribosomal subunit protein eL13 (211 aa).

Residue lysine 16 is modified to N6-acetyllysine. Residues serine 52 and serine 77 each carry the phosphoserine modification. Glycyl lysine isopeptide (Lys-Gly) (interchain with G-Cter in SUMO2) cross-links involve residues lysine 123 and lysine 145. A Glycyl lysine isopeptide (Lys-Gly) (interchain with G-Cter in SUMO1); alternate cross-link involves residue lysine 174. Glycyl lysine isopeptide (Lys-Gly) (interchain with G-Cter in SUMO2); alternate cross-links involve residues lysine 174 and lysine 177. An N6-acetyllysine; alternate modification is found at lysine 177.

This sequence belongs to the eukaryotic ribosomal protein eL13 family. Component of the 60S large ribosomal subunit (LSU).

It localises to the cytoplasm. Component of the ribosome, a large ribonucleoprotein complex responsible for the synthesis of proteins in the cell. The small ribosomal subunit (SSU) binds messenger RNAs (mRNAs) and translates the encoded message by selecting cognate aminoacyl-transfer RNA (tRNA) molecules. The large subunit (LSU) contains the ribosomal catalytic site termed the peptidyl transferase center (PTC), which catalyzes the formation of peptide bonds, thereby polymerizing the amino acids delivered by tRNAs into a polypeptide chain. The nascent polypeptides leave the ribosome through a tunnel in the LSU and interact with protein factors that function in enzymatic processing, targeting, and the membrane insertion of nascent chains at the exit of the ribosomal tunnel. As part of the LSU, it is probably required for its formation and the maturation of rRNAs. Plays a role in bone development. This is Large ribosomal subunit protein eL13 (RPL13) from Bos taurus (Bovine).